The sequence spans 363 residues: Phosphoserine aminotransferase (363 aa).

An L-glutamate-binding site is contributed by arginine 42. Pyridoxal 5'-phosphate contacts are provided by residues 76 to 77, tryptophan 102, threonine 156, aspartate 175, and glutamine 198; that span reads GR. Lysine 199 is modified (N6-(pyridoxal phosphate)lysine). Position 240-241 (240-241) interacts with pyridoxal 5'-phosphate; the sequence is NT.

Belongs to the class-V pyridoxal-phosphate-dependent aminotransferase family. SerC subfamily. Homodimer. Requires pyridoxal 5'-phosphate as cofactor.

Its subcellular location is the cytoplasm. It carries out the reaction O-phospho-L-serine + 2-oxoglutarate = 3-phosphooxypyruvate + L-glutamate. It catalyses the reaction 4-(phosphooxy)-L-threonine + 2-oxoglutarate = (R)-3-hydroxy-2-oxo-4-phosphooxybutanoate + L-glutamate. The protein operates within amino-acid biosynthesis; L-serine biosynthesis; L-serine from 3-phospho-D-glycerate: step 2/3. Its pathway is cofactor biosynthesis; pyridoxine 5'-phosphate biosynthesis; pyridoxine 5'-phosphate from D-erythrose 4-phosphate: step 3/5. Functionally, catalyzes the reversible conversion of 3-phosphohydroxypyruvate to phosphoserine and of 3-hydroxy-2-oxo-4-phosphonooxybutanoate to phosphohydroxythreonine. This Shewanella sp. (strain MR-7) protein is Phosphoserine aminotransferase.